A 510-amino-acid polypeptide reads, in one-letter code: NAD(P)H-quinone oxidoreductase subunit 2 B, chloroplastic (510 aa).

The next 13 helical transmembrane spans lie at 24 to 44 (LLLF…GLIL), 57 to 77 (IPWL…ALLF), 99 to 119 (IFQF…VEYI), 124 to 144 (MAIT…MFLC), 149 to 169 (LITI…LSGY), 183 to 203 (YLLM…WLYG), 227 to 247 (PGIS…LSPA), 295 to 315 (WHLL…LIAI), 323 to 343 (MLAY…IVGD), 354 to 374 (YMLF…LFGL), 395 to 415 (ALSL…AGFF), 418 to 438 (LYLF…IGLL), and 484 to 504 (MIVC…IIAI).

Belongs to the complex I subunit 2 family. As to quaternary structure, NDH is composed of at least 16 different subunits, 5 of which are encoded in the nucleus.

It is found in the plastid. Its subcellular location is the chloroplast thylakoid membrane. The enzyme catalyses a plastoquinone + NADH + (n+1) H(+)(in) = a plastoquinol + NAD(+) + n H(+)(out). The catalysed reaction is a plastoquinone + NADPH + (n+1) H(+)(in) = a plastoquinol + NADP(+) + n H(+)(out). Its function is as follows. NDH shuttles electrons from NAD(P)H:plastoquinone, via FMN and iron-sulfur (Fe-S) centers, to quinones in the photosynthetic chain and possibly in a chloroplast respiratory chain. The immediate electron acceptor for the enzyme in this species is believed to be plastoquinone. Couples the redox reaction to proton translocation, and thus conserves the redox energy in a proton gradient. The protein is NAD(P)H-quinone oxidoreductase subunit 2 B, chloroplastic of Helianthus annuus (Common sunflower).